The following is a 558-amino-acid chain: Asparagine--tRNA ligase, cytoplasmic (558 aa).

The residue at position 71 (Ser-71) is a Phosphoserine. A disordered region spans residues 79–101 (MWHREQMKSESREKKEAEDSLRR). The span at 81 to 101 (HREQMKSESREKKEAEDSLRR) shows a compositional bias: basic and acidic residues. Residues Lys-254 and Lys-500 each carry the N6-acetyllysine modification.

This sequence belongs to the class-II aminoacyl-tRNA synthetase family. As to quaternary structure, homodimer.

The protein localises to the cytoplasm. It carries out the reaction tRNA(Asn) + L-asparagine + ATP = L-asparaginyl-tRNA(Asn) + AMP + diphosphate + H(+). Functionally, catalyzes the attachment of asparagine to tRNA(Asn) in a two-step reaction: asparagine is first activated by ATP to form Asn-AMP and then transferred to the acceptor end of tRNA(Asn). In addition to its essential role in protein synthesis, acts as a signaling molecule that induced migration of CCR3-expressing cells. Has an essential role in the development of the cerebral cortex, being required for proper proliferation of radial glial cells. This is Asparagine--tRNA ligase, cytoplasmic from Macaca fascicularis (Crab-eating macaque).